A 250-amino-acid polypeptide reads, in one-letter code: Triosephosphate isomerase (250 aa).

Asn9 to Lys11 is a substrate binding site. Residue His95 is the Electrophile of the active site. Glu167 functions as the Proton acceptor in the catalytic mechanism. Residues Gly173, Ser212, and Gly233 to Gly234 contribute to the substrate site.

This sequence belongs to the triosephosphate isomerase family. In terms of assembly, homodimer.

It localises to the cytoplasm. The enzyme catalyses D-glyceraldehyde 3-phosphate = dihydroxyacetone phosphate. The protein operates within carbohydrate biosynthesis; gluconeogenesis. It participates in carbohydrate degradation; glycolysis; D-glyceraldehyde 3-phosphate from glycerone phosphate: step 1/1. Its function is as follows. Involved in the gluconeogenesis. Catalyzes stereospecifically the conversion of dihydroxyacetone phosphate (DHAP) to D-glyceraldehyde-3-phosphate (G3P). This is Triosephosphate isomerase from Endomicrobium trichonymphae.